We begin with the raw amino-acid sequence, 651 residues long: Acetyl-coenzyme A synthetase (651 aa).

Residues 191–194 (RGGK), T311, and N335 contribute to the CoA site. Residues 387-389 (GEP), 411-416 (DTWWQT), D500, and R515 contribute to the ATP site. Residue S523 participates in CoA binding. R526 provides a ligand contact to ATP. V537, H539, and V542 together coordinate Mg(2+). A CoA-binding site is contributed by R584. Position 609 is an N6-acetyllysine (K609).

The protein belongs to the ATP-dependent AMP-binding enzyme family. Mg(2+) serves as cofactor. In terms of processing, acetylated. Deacetylation by the SIR2-homolog deacetylase activates the enzyme.

It carries out the reaction acetate + ATP + CoA = acetyl-CoA + AMP + diphosphate. In terms of biological role, catalyzes the conversion of acetate into acetyl-CoA (AcCoA), an essential intermediate at the junction of anabolic and catabolic pathways. AcsA undergoes a two-step reaction. In the first half reaction, AcsA combines acetate with ATP to form acetyl-adenylate (AcAMP) intermediate. In the second half reaction, it can then transfer the acetyl group from AcAMP to the sulfhydryl group of CoA, forming the product AcCoA. The protein is Acetyl-coenzyme A synthetase of Pseudomonas savastanoi pv. phaseolicola (strain 1448A / Race 6) (Pseudomonas syringae pv. phaseolicola (strain 1448A / Race 6)).